Here is a 178-residue protein sequence, read N- to C-terminus: Transcription factor E (178 aa).

Positions 4 to 88 constitute an HTH TFE/IIEalpha-type domain; the sequence is AEDLFINLAK…YWKPNIDQIN (85 aa).

The protein belongs to the TFE family. Monomer. Interaction with RNA polymerase subunits RpoF and RpoE is necessary for Tfe stimulatory transcription activity. Able to interact with Tbp and RNA polymerase in the absence of DNA promoter. Interacts both with the preinitiation and elongation complexes.

Transcription factor that plays a role in the activation of archaeal genes transcribed by RNA polymerase. Facilitates transcription initiation by enhancing TATA-box recognition by TATA-box-binding protein (Tbp), and transcription factor B (Tfb) and RNA polymerase recruitment. Not absolutely required for transcription in vitro, but particularly important in cases where Tbp or Tfb function is not optimal. It dynamically alters the nucleic acid-binding properties of RNA polymerases by stabilizing the initiation complex and destabilizing elongation complexes. Seems to translocate with the RNA polymerase following initiation and acts by binding to the non template strand of the transcription bubble in elongation complexes. The polypeptide is Transcription factor E (Saccharolobus islandicus (strain L.S.2.15 / Lassen #1) (Sulfolobus islandicus)).